The chain runs to 93 residues: Translation initiation factor IF-1 (93 aa).

In terms of domain architecture, S1-like spans 1–72 (MAKEELIQFE…EKGRLIFRHK (72 aa)). The interval 70-93 (RHKDERPGGGPPRGAPPRGQFRRR) is disordered.

The protein belongs to the IF-1 family. Component of the 30S ribosomal translation pre-initiation complex which assembles on the 30S ribosome in the order IF-2 and IF-3, IF-1 and N-formylmethionyl-tRNA(fMet); mRNA recruitment can occur at any time during PIC assembly.

The protein resides in the cytoplasm. In terms of biological role, one of the essential components for the initiation of protein synthesis. Stabilizes the binding of IF-2 and IF-3 on the 30S subunit to which N-formylmethionyl-tRNA(fMet) subsequently binds. Helps modulate mRNA selection, yielding the 30S pre-initiation complex (PIC). Upon addition of the 50S ribosomal subunit IF-1, IF-2 and IF-3 are released leaving the mature 70S translation initiation complex. This chain is Translation initiation factor IF-1, found in Rhodopseudomonas palustris (strain BisB18).